The following is a 113-amino-acid chain: Retrotransposon Gag-like protein 8 (113 aa).

Belongs to the FAM127 family.

This chain is Retrotransposon Gag-like protein 8 (RTL8A), found in Bos taurus (Bovine).